The primary structure comprises 204 residues: MSRGALIVFEGLDKSGKTTQCMNIMESIPANTIKYLNFPQRSTVTGKMIDDYLTRKKTYNDHIVNLLFCANRWEFASFIQEQLEQGITLIVDRYAFSGVAYATAKGASMTLSKSYESGLPKPDLVIFLESGSKEINRNIGEEIYEDVEFQQKVLQEYKKMIEEGDIHWQIISSEFEEDVKKELIKNIVIEAIHTVTGPVGQLWM.

Belongs to the thymidylate kinase family. As to quaternary structure, homodimer; the dimer arrangement is orthogonal and not antiparallel as in human enzyme.

It carries out the reaction dTMP + ATP = dTDP + ADP. The protein operates within pyrimidine metabolism; dTTP biosynthesis. Poxvirus TMP kinase is able to phosphorylate dTMP, dUMP and also dGMP from any purine and pyrimidine nucleoside triphosphate. The large substrate specificity is explained by the presence of a canal connecting the edge of the dimer interface to the TMP base binding pocket, canal not found in the human homolog. This chain is Thymidylate kinase (OPG178), found in Cynomys gunnisoni (Gunnison's prairie dog).